A 204-amino-acid polypeptide reads, in one-letter code: High frequency lysogenization protein HflD homolog (204 aa).

This sequence belongs to the HflD family.

The protein resides in the cytoplasm. Its subcellular location is the cell inner membrane. The chain is High frequency lysogenization protein HflD homolog from Stenotrophomonas maltophilia (strain R551-3).